A 158-amino-acid chain; its full sequence is UPF0225 protein Pfl01_1218 (158 aa).

It belongs to the UPF0225 family.

This Pseudomonas fluorescens (strain Pf0-1) protein is UPF0225 protein Pfl01_1218.